Consider the following 292-residue polypeptide: Phosphatidylserine decarboxylase proenzyme (292 aa).

Residues Asp89, His146, and Ser252 each act as charge relay system; for autoendoproteolytic cleavage activity in the active site. Residue Ser252 is the Schiff-base intermediate with substrate; via pyruvic acid; for decarboxylase activity of the active site. Ser252 bears the Pyruvic acid (Ser); by autocatalysis mark.

The protein belongs to the phosphatidylserine decarboxylase family. PSD-B subfamily. Prokaryotic type I sub-subfamily. As to quaternary structure, heterodimer of a large membrane-associated beta subunit and a small pyruvoyl-containing alpha subunit. Pyruvate serves as cofactor. Post-translationally, is synthesized initially as an inactive proenzyme. Formation of the active enzyme involves a self-maturation process in which the active site pyruvoyl group is generated from an internal serine residue via an autocatalytic post-translational modification. Two non-identical subunits are generated from the proenzyme in this reaction, and the pyruvate is formed at the N-terminus of the alpha chain, which is derived from the carboxyl end of the proenzyme. The autoendoproteolytic cleavage occurs by a canonical serine protease mechanism, in which the side chain hydroxyl group of the serine supplies its oxygen atom to form the C-terminus of the beta chain, while the remainder of the serine residue undergoes an oxidative deamination to produce ammonia and the pyruvoyl prosthetic group on the alpha chain. During this reaction, the Ser that is part of the protease active site of the proenzyme becomes the pyruvoyl prosthetic group, which constitutes an essential element of the active site of the mature decarboxylase.

The protein localises to the cell membrane. It catalyses the reaction a 1,2-diacyl-sn-glycero-3-phospho-L-serine + H(+) = a 1,2-diacyl-sn-glycero-3-phosphoethanolamine + CO2. The protein operates within phospholipid metabolism; phosphatidylethanolamine biosynthesis; phosphatidylethanolamine from CDP-diacylglycerol: step 2/2. In terms of biological role, catalyzes the formation of phosphatidylethanolamine (PtdEtn) from phosphatidylserine (PtdSer). This Shewanella sp. (strain MR-4) protein is Phosphatidylserine decarboxylase proenzyme.